The primary structure comprises 500 residues: Zinc finger protein ENHYDROUS (500 aa).

The segment at 1–42 is disordered; it reads MPVDLDNSSTVSGDASVSSTGNQNLTPKSVGKKKRNLPGMPD. Residues 8-21 are compositionally biased toward low complexity; the sequence is SSTVSGDASVSSTG. Serine 51 is subject to Phosphoserine. 2 consecutive C2H2-type zinc fingers follow at residues 61–83 and 102–132; these read FVCEICNKGFQRDQNLQLHRRGH and YVCPVSGCVHHDPSRALGDLTGIKKHFCRKH. The short motif at 124 to 131 is the Nuclear localization signal element; it reads IKKHFCRK. A C2H2-type 2; degenerate zinc finger spans residues 137–160; the sequence is WKCEKCSKKYAVQSDWKAHSKICG. Cysteine 139, cysteine 142, histidine 155, cysteine 159, cysteine 166, cysteine 168, histidine 181, and cysteine 185 together coordinate Zn(2+). The CCHC-type 2; atypical zinc finger occupies 164-187; that stretch reads YKCDCGTLFSRRDSFITHRAFCDA. An SHR-binding region spans residues 174–186; sequence RRDSFITHRAFCD. The disordered stretch occupies residues 196 to 236; that stretch reads HTQSKKLYPETVTRKNPEIEQKSPAAVESSPSLPPSSPPSV. The segment covering 207–216 has biased composition (basic and acidic residues); that stretch reads VTRKNPEIEQ.

As to quaternary structure, interacts with the DELLA proteins (e.g. GAI/RGA2, RGA, RGL1, RGL2 and RGLG3), acting as coactivators. As to expression, at 3 days post anthesis (DPA), expressed in the chalazal endosperm region. By 6 DPA, expressed in the endosperm and embryo. In fully germinated seed, strongest expression in the root tip and not detected in the cotyledons. In 4-days old seedlings, restricted to the vasculature of the cotyledons, the shoot apical meristem region, and the root tip. By 8 days, restricted to newly emerged leaves.

It is found in the nucleus. Functionally, transcription factor promoting the transition to germination by regulating light and hormonal signaling during seed maturation. Acts as a positive regulator of phytochrome and/or gibberellin action. This Arabidopsis thaliana (Mouse-ear cress) protein is Zinc finger protein ENHYDROUS.